Here is a 631-residue protein sequence, read N- to C-terminus: Peptide-N(4)-(N-acetyl-beta-glucosaminyl)asparagine amidase (631 aa).

The region spanning 34-97 (EAVRILLVLL…PSSNAYTLPT (64 aa)) is the PUB domain. Serine 126 carries the post-translational modification Phosphoserine. Zn(2+) contacts are provided by cysteine 246, cysteine 249, cysteine 272, and cysteine 273. Cysteine 296 (nucleophile) is an active-site residue. Residues histidine 323 and aspartate 340 contribute to the active site. The 191-residue stretch at 441-631 (ELKGRSSGSL…YPFDLQVQLH (191 aa)) folds into the PAW domain.

It belongs to the transglutaminase-like superfamily. PNGase family. Zn(2+) is required as a cofactor.

It is found in the cytoplasm. It catalyses the reaction Hydrolysis of an N(4)-(acetyl-beta-D-glucosaminyl)asparagine residue in which the glucosamine residue may be further glycosylated, to yield a (substituted) N-acetyl-beta-D-glucosaminylamine and a peptide containing an aspartate residue.. Its function is as follows. Specifically deglycosylates the denatured form of N-linked glycoproteins in the cytoplasm and assists their proteasome-mediated degradation. Cleaves the beta-aspartyl-glucosamine (GlcNAc) of the glycan and the amide side chain of Asn, converting Asn to Asp. Prefers proteins containing high-mannose over those bearing complex type oligosaccharides. Can recognize misfolded proteins in the endoplasmic reticulum that are exported to the cytosol to be destroyed and deglycosylate them, while it has no activity toward native proteins. Deglycosylation is a prerequisite for subsequent proteasome-mediated degradation of some, but not all, misfolded glycoproteins. In Drosophila melanogaster (Fruit fly), this protein is Peptide-N(4)-(N-acetyl-beta-glucosaminyl)asparagine amidase (Pngl).